A 341-amino-acid polypeptide reads, in one-letter code: tRNA N6-adenosine threonylcarbamoyltransferase (341 aa).

Fe cation is bound by residues His115 and His119. Substrate-binding positions include 138–142 (LVSGG), Asp171, Gly184, and Asn276. A Fe cation-binding site is contributed by Asp304.

Belongs to the KAE1 / TsaD family. Fe(2+) serves as cofactor.

The protein resides in the cytoplasm. The catalysed reaction is L-threonylcarbamoyladenylate + adenosine(37) in tRNA = N(6)-L-threonylcarbamoyladenosine(37) in tRNA + AMP + H(+). Functionally, required for the formation of a threonylcarbamoyl group on adenosine at position 37 (t(6)A37) in tRNAs that read codons beginning with adenine. Is involved in the transfer of the threonylcarbamoyl moiety of threonylcarbamoyl-AMP (TC-AMP) to the N6 group of A37, together with TsaE and TsaB. TsaD likely plays a direct catalytic role in this reaction. In Stenotrophomonas maltophilia (strain R551-3), this protein is tRNA N6-adenosine threonylcarbamoyltransferase.